Consider the following 410-residue polypeptide: S-adenosylmethionine synthase (410 aa).

His-21 contributes to the ATP binding site. Residue Asp-23 participates in Mg(2+) binding. Glu-49 provides a ligand contact to K(+). Residues Glu-62 and Gln-105 each contribute to the L-methionine site. A flexible loop region spans residues 105–115 (QSQEIGAGVDQ). The tract at residues 107-133 (QEIGAGVDQSHEVRSGENTDADDQAGA) is disordered. Residues 180–182 (DGK), Asp-261, 267–268 (RK), Ala-284, and Lys-288 each bind ATP. Asp-261 is a binding site for L-methionine. Lys-292 contacts L-methionine.

The protein belongs to the AdoMet synthase family. In terms of assembly, homotetramer; dimer of dimers. It depends on Mg(2+) as a cofactor. The cofactor is K(+).

It localises to the cytoplasm. The enzyme catalyses L-methionine + ATP + H2O = S-adenosyl-L-methionine + phosphate + diphosphate. It participates in amino-acid biosynthesis; S-adenosyl-L-methionine biosynthesis; S-adenosyl-L-methionine from L-methionine: step 1/1. Its function is as follows. Catalyzes the formation of S-adenosylmethionine (AdoMet) from methionine and ATP. The overall synthetic reaction is composed of two sequential steps, AdoMet formation and the subsequent tripolyphosphate hydrolysis which occurs prior to release of AdoMet from the enzyme. This is S-adenosylmethionine synthase from Corynebacterium diphtheriae (strain ATCC 700971 / NCTC 13129 / Biotype gravis).